We begin with the raw amino-acid sequence, 157 residues long: Small ribosomal subunit protein uS7 (157 aa).

This sequence belongs to the universal ribosomal protein uS7 family. In terms of assembly, part of the 30S ribosomal subunit. Contacts proteins S9 and S11.

Its function is as follows. One of the primary rRNA binding proteins, it binds directly to 16S rRNA where it nucleates assembly of the head domain of the 30S subunit. Is located at the subunit interface close to the decoding center, probably blocks exit of the E-site tRNA. The protein is Small ribosomal subunit protein uS7 of Chlamydia caviae (strain ATCC VR-813 / DSM 19441 / 03DC25 / GPIC) (Chlamydophila caviae).